The primary structure comprises 437 residues: Lipopolysaccharide biosynthesis protein RfbH (437 aa).

It belongs to the DegT/DnrJ/EryC1 family. Requires pyridoxal 5'-phosphate as cofactor.

Its pathway is bacterial outer membrane biogenesis; LPS O-antigen biosynthesis. The polypeptide is Lipopolysaccharide biosynthesis protein RfbH (rfbH) (Salmonella typhimurium (strain LT2 / SGSC1412 / ATCC 700720)).